Reading from the N-terminus, the 245-residue chain is Orotidine 5'-phosphate decarboxylase (245 aa).

Residues Asp-22, Lys-44, 71-80 (DLKFHDIPNT), Thr-131, Arg-192, Gln-201, Gly-221, and Arg-222 each bind substrate. The active-site Proton donor is the Lys-73.

The protein belongs to the OMP decarboxylase family. Type 1 subfamily. Homodimer.

It carries out the reaction orotidine 5'-phosphate + H(+) = UMP + CO2. It functions in the pathway pyrimidine metabolism; UMP biosynthesis via de novo pathway; UMP from orotate: step 2/2. In terms of biological role, catalyzes the decarboxylation of orotidine 5'-monophosphate (OMP) to uridine 5'-monophosphate (UMP). The protein is Orotidine 5'-phosphate decarboxylase of Escherichia coli O157:H7.